Here is a 707-residue protein sequence, read N- to C-terminus: Polyribonucleotide nucleotidyltransferase (707 aa).

Mg(2+)-binding residues include Asp485 and Asp491. The region spanning 552–615 is the KH domain; it reads PRITVINIPK…AAIKWIKGIV (64 aa). One can recognise an S1 motif domain in the interval 621 to 689; that stretch reads GEIYEGKVVK…DRGKVKLSMK (69 aa).

The protein belongs to the polyribonucleotide nucleotidyltransferase family. Mg(2+) serves as cofactor.

It is found in the cytoplasm. The catalysed reaction is RNA(n+1) + phosphate = RNA(n) + a ribonucleoside 5'-diphosphate. Functionally, involved in mRNA degradation. Catalyzes the phosphorolysis of single-stranded polyribonucleotides processively in the 3'- to 5'-direction. This is Polyribonucleotide nucleotidyltransferase from Rhodospirillum centenum (strain ATCC 51521 / SW).